The chain runs to 477 residues: MAKWRLATATLRRQLQSSSPTISTFKNPTKALSAAAHQSTRSYSTTQTDDSRGKWLTLPPFSPTIDGTAVGKDLLSDGDSVKSSTDNSKTTALRWILRCRPDLPRTLVQKLFRLRQVRREMSMSVDGDELQRSQLKRVAAKESLNVGDRIYLPLSVDNDTPQTPPAKKESFQCSDEERKFVCSLVLYKDPAIIVLNKPHGLAVQGGSGIKTSIDELAASCLKFDKSESPRLVHRLDRDCSGLLVLARTQTAATVLHSIFREKTTGASAYGVKKNVKSLKRKYMALVIGCPPRQRGQISAPLRKVVVDDGKSERITVNDNGELVSTQHAITEYRVIESSPHGYTWLELRPLTGRKHQLRVHCAEVLGTPIVGDYKYGWQAHKAREPFVSSENNPTKQSSSPFGLDLDGGDVSSKQPHLHLHSKQIDLPNISQLLEKMQVSSDSDISDLDSLKFDAPLPSHMQLSFNLLKSRVETCDKN.

The N-terminal 43 residues, 1 to 43 (MAKWRLATATLRRQLQSSSPTISTFKNPTKALSAAAHQSTRSY), are a transit peptide targeting the mitochondrion. The interval 34–55 (AAAHQSTRSYSTTQTDDSRGKW) is disordered. Residues 36 to 48 (AHQSTRSYSTTQT) are compositionally biased toward polar residues. One can recognise an S4 RNA-binding domain in the interval 90–175 (TTALRWILRC…AKKESFQCSD (86 aa)). Asp-236 is a catalytic residue.

Belongs to the pseudouridine synthase RluA family.

It localises to the mitochondrion. The enzyme catalyses a uridine in RNA = a pseudouridine in RNA. The sequence is that of RNA pseudouridine synthase 4, mitochondrial from Arabidopsis thaliana (Mouse-ear cress).